A 359-amino-acid polypeptide reads, in one-letter code: Fc receptor-like A (359 aa).

The N-terminal stretch at 1-27 (MKLGCVLMAWALYLSLGVLWVAQMLLA) is a signal peptide. 2 Ig-like C2-type domains span residues 70-159 (PFHL…ETAS) and 170-257 (PAPI…PQLE). Disulfide bonds link Cys99-Cys143 and Cys192-Cys240. The segment at 259–313 (RVQGASSSAAPPTLNPAPQKSAAPGTAPEEAPGPLPPPPTPSSEDPGFSSPLGMP) is disordered. The segment covering 279–288 (SAAPGTAPEE) has biased composition (low complexity). Pro residues predominate over residues 289-299 (APGPLPPPPTP).

As to quaternary structure, monomer or homodimer; disulfide-linked. Expressed specifically in primary and secondary lymphoid tissues like lymph node, spleen and tonsil. Specifically expressed in B-cells with a high level in normal germinal center B-cells, centroblasts and in a subset of diffuse large B-cell lymphomas. Highly expressed in bone marrow B-cells and weakly in earlier B lineage cells. Expressed in pre-germinal and germinal center B-cells in secondary lymphoid tissues. Also expressed in melanoma and melanocytes.

Its subcellular location is the cytoplasm. May be implicated in B-cell differentiation and lymphomagenesis. The polypeptide is Fc receptor-like A (FCRLA) (Homo sapiens (Human)).